The chain runs to 177 residues: Large ribosomal subunit protein uL16 (177 aa).

This sequence belongs to the universal ribosomal protein uL16 family.

This is Large ribosomal subunit protein uL16 from Natronomonas pharaonis (strain ATCC 35678 / DSM 2160 / CIP 103997 / JCM 8858 / NBRC 14720 / NCIMB 2260 / Gabara) (Halobacterium pharaonis).